Consider the following 118-residue polypeptide: UPF0344 protein YisL (118 aa).

A run of 4 helical transmembrane segments spans residues 4 to 24 (LHIT…SLYS), 33 to 53 (ITHM…AELF), 62 to 82 (EYAG…MLLI), and 93 to 113 (LWVG…HLPI).

This sequence belongs to the UPF0344 family.

The protein resides in the cell membrane. This is UPF0344 protein YisL (yisL) from Bacillus subtilis (strain 168).